The sequence spans 298 residues: S-adenosylmethionine-dependent nucleotide dehydratase (298 aa).

Residues 8-235 (ANKELVVNWH…QRFGEIIYAE (228 aa)) enclose the Radical SAM core domain. The [4Fe-4S] cluster site is built by cysteine 22, cysteine 26, and cysteine 29.

Belongs to the radical SAM superfamily. Viperin family. The cofactor is [4Fe-4S] cluster.

It catalyses the reaction CTP + AH2 + S-adenosyl-L-methionine = 3'-deoxy-3',4'-didehydro-CTP + 5'-deoxyadenosine + L-methionine + A + H2O + H(+). It carries out the reaction UTP + AH2 + S-adenosyl-L-methionine = 3'-deoxy-3',4'-didehydro-UTP + 5'-deoxyadenosine + L-methionine + A + H2O + H(+). In terms of biological role, expression of pVip8 in E.coli (strain MG1655) confers resistance to phages lambda, P1, SECphi8 and T7. Prevents culture collapse upon infection with T7. Catalyzes the conversion of cytidine triphosphate (CTP) to 3'-deoxy-3',4'-didehydro-CTP (ddhCTP) and uridine triphosphate (UTP) to 3'-deoxy-3',4'-didehydro-UTP (ddhUTP), probably via a SAM-dependent radical mechanism. The modified nucleotides repress transcription from T7 RNA polymerase-directed genes (possibly by acting as chain terminators), strongly suggesting these nucleotides block viral polymerase transcription. This chain is S-adenosylmethionine-dependent nucleotide dehydratase, found in Psychrobacter lutiphocae (strain DSM 21542 / CCUG 56590 / IMMIB L-1110).